Reading from the N-terminus, the 283-residue chain is Ribonuclease P protein subunit p38 (283 aa).

A2 carries the post-translational modification N-acetylalanine. Phosphoserine is present on residues S12, S226, and S235.

Belongs to the eukaryotic ribosomal protein eL8 family. Component of nuclear RNase P and RNase MRP ribonucleoproteins. RNase P consists of a catalytic RNA moiety and about 10 protein subunits; POP1, POP4, POP5, POP7, RPP14, RPP21, RPP25, RPP30, RPP38 and RPP40. Within the RNase P complex, POP1, POP7 and RPP25 form the 'finger' subcomplex, POP5, RPP14, RPP40 and homodimeric RPP30 form the 'palm' subcomplex, and RPP21, POP4 and RPP38 form the 'wrist' subcomplex. All subunits of the RNase P complex interact with the catalytic RNA. Several subunits of RNase P are also part of the RNase MRP complex. RNase MRP consists of a catalytic RNA moiety and about 8 protein subunits; POP1, POP7, RPP25, RPP30, RPP38, RPP40 and possibly also POP4 and POP5.

The protein resides in the nucleus. It is found in the nucleolus. In terms of biological role, component of ribonuclease P, a ribonucleoprotein complex that generates mature tRNA molecules by cleaving their 5'-ends. Also a component of the MRP ribonuclease complex, which cleaves pre-rRNA sequences. In Homo sapiens (Human), this protein is Ribonuclease P protein subunit p38 (RPP38).